The following is an 86-amino-acid chain: UPF0297 protein SERP1181 (86 aa).

This sequence belongs to the UPF0297 family.

This chain is UPF0297 protein SERP1181, found in Staphylococcus epidermidis (strain ATCC 35984 / DSM 28319 / BCRC 17069 / CCUG 31568 / BM 3577 / RP62A).